Consider the following 300-residue polypeptide: Bifunctional protein FolD 2 (300 aa).

NADP(+)-binding positions include 165–167 (GRS), Ser-190, and Ile-231.

Belongs to the tetrahydrofolate dehydrogenase/cyclohydrolase family. Homodimer.

It catalyses the reaction (6R)-5,10-methylene-5,6,7,8-tetrahydrofolate + NADP(+) = (6R)-5,10-methenyltetrahydrofolate + NADPH. The catalysed reaction is (6R)-5,10-methenyltetrahydrofolate + H2O = (6R)-10-formyltetrahydrofolate + H(+). It functions in the pathway one-carbon metabolism; tetrahydrofolate interconversion. Catalyzes the oxidation of 5,10-methylenetetrahydrofolate to 5,10-methenyltetrahydrofolate and then the hydrolysis of 5,10-methenyltetrahydrofolate to 10-formyltetrahydrofolate. In Pseudomonas syringae pv. tomato (strain ATCC BAA-871 / DC3000), this protein is Bifunctional protein FolD 2.